A 213-amino-acid chain; its full sequence is Orotate phosphoribosyltransferase (213 aa).

Lysine 26 serves as a coordination point for 5-phospho-alpha-D-ribose 1-diphosphate. Orotate is bound at residue phenylalanine 34–phenylalanine 35. 5-phospho-alpha-D-ribose 1-diphosphate is bound by residues tyrosine 72–lysine 73, arginine 99, lysine 100, lysine 103, histidine 105, and aspartate 124–alanine 132. Residues threonine 128 and arginine 156 each contribute to the orotate site.

The protein belongs to the purine/pyrimidine phosphoribosyltransferase family. PyrE subfamily. In terms of assembly, homodimer. Mg(2+) serves as cofactor.

The catalysed reaction is orotidine 5'-phosphate + diphosphate = orotate + 5-phospho-alpha-D-ribose 1-diphosphate. The protein operates within pyrimidine metabolism; UMP biosynthesis via de novo pathway; UMP from orotate: step 1/2. Functionally, catalyzes the transfer of a ribosyl phosphate group from 5-phosphoribose 1-diphosphate to orotate, leading to the formation of orotidine monophosphate (OMP). In Yersinia enterocolitica serotype O:8 / biotype 1B (strain NCTC 13174 / 8081), this protein is Orotate phosphoribosyltransferase.